The following is a 158-amino-acid chain: Transcription elongation factor GreA (158 aa).

Residues Ala-53 to Gln-75 adopt a coiled-coil conformation.

It belongs to the GreA/GreB family.

Necessary for efficient RNA polymerase transcription elongation past template-encoded arresting sites. The arresting sites in DNA have the property of trapping a certain fraction of elongating RNA polymerases that pass through, resulting in locked ternary complexes. Cleavage of the nascent transcript by cleavage factors such as GreA or GreB allows the resumption of elongation from the new 3'terminus. GreA releases sequences of 2 to 3 nucleotides. The chain is Transcription elongation factor GreA from Sphingopyxis alaskensis (strain DSM 13593 / LMG 18877 / RB2256) (Sphingomonas alaskensis).